The following is a 433-amino-acid chain: Adenylosuccinate synthetase (433 aa).

GTP is bound by residues 11-17 (GDEGKGK) and 39-41 (GHT). Asp-12 acts as the Proton acceptor in catalysis. The Mg(2+) site is built by Asp-12 and Gly-39. IMP contacts are provided by residues 12-15 (DEGK), 37-40 (NAGH), Thr-134, Arg-148, Asn-230, Thr-245, and Arg-309. Catalysis depends on His-40, which acts as the Proton donor. A substrate-binding site is contributed by 305-311 (VTTGRKR). GTP-binding positions include Arg-311, 337–339 (KLD), and 419–421 (GTG).

This sequence belongs to the adenylosuccinate synthetase family. Homodimer. Mg(2+) is required as a cofactor.

It is found in the cytoplasm. The catalysed reaction is IMP + L-aspartate + GTP = N(6)-(1,2-dicarboxyethyl)-AMP + GDP + phosphate + 2 H(+). It participates in purine metabolism; AMP biosynthesis via de novo pathway; AMP from IMP: step 1/2. Functionally, plays an important role in the de novo pathway and in the salvage pathway of purine nucleotide biosynthesis. Catalyzes the first committed step in the biosynthesis of AMP from IMP. This Saccharomyces cerevisiae (strain AWRI1631) (Baker's yeast) protein is Adenylosuccinate synthetase.